The primary structure comprises 448 residues: Selenide, water dikinase 2 (448 aa).

Ala-2 is modified (N-acetylalanine). The residue at position 46 (Ser-46) is a Phosphoserine. Sec-60 is an active-site residue. Residue Sec-60 is a non-standard amino acid, selenocysteine. Lys-63 provides a ligand contact to ATP. Residues 85–107 (LGRGLVGGQEEASQEAGLPAGAG) form a disordered region. Ser-97 carries the post-translational modification Phosphoserine. ATP contacts are provided by residues 118–120 (GMD), Asp-138, Asp-161, and 212–215 (GGQT). Mg(2+) is bound at residue Asp-120. A Mg(2+)-binding site is contributed by Asp-161. Asp-316 lines the Mg(2+) pocket.

It belongs to the selenophosphate synthase 1 family. Class I subfamily. In terms of assembly, homodimer. Requires Mg(2+) as cofactor. Post-translationally, truncated SEPHS2 proteins produced by failed UGA/Sec decoding are ubiquitinated by the CRL2(KLHDC3) complex, which recognizes the glycine (Gly) at the C-terminus of truncated SEPHS2 proteins.

The catalysed reaction is hydrogenselenide + ATP + H2O = selenophosphate + AMP + phosphate + 2 H(+). In terms of biological role, synthesizes selenophosphate from selenide and ATP. This Homo sapiens (Human) protein is Selenide, water dikinase 2 (SEPHS2).